A 377-amino-acid polypeptide reads, in one-letter code: Chaperone protein DnaJ (377 aa).

The 66-residue stretch at 4 to 69 (DYYEVLGVSK…EKRARYDQMG (66 aa)) folds into the J domain. The CR-type zinc-finger motif lies at 131-213 (GTEKEIQVPR…CSGKGTTRKV (83 aa)). 8 residues coordinate Zn(2+): cysteine 144, cysteine 147, cysteine 161, cysteine 164, cysteine 187, cysteine 190, cysteine 201, and cysteine 204. CXXCXGXG motif repeat units lie at residues 144 to 151 (CTECHGSG), 161 to 168 (CSQCHGTG), 187 to 194 (CPACNGSG), and 201 to 208 (CKECSGKG).

The protein belongs to the DnaJ family. Homodimer. The cofactor is Zn(2+).

It is found in the cytoplasm. Functionally, participates actively in the response to hyperosmotic and heat shock by preventing the aggregation of stress-denatured proteins and by disaggregating proteins, also in an autonomous, DnaK-independent fashion. Unfolded proteins bind initially to DnaJ; upon interaction with the DnaJ-bound protein, DnaK hydrolyzes its bound ATP, resulting in the formation of a stable complex. GrpE releases ADP from DnaK; ATP binding to DnaK triggers the release of the substrate protein, thus completing the reaction cycle. Several rounds of ATP-dependent interactions between DnaJ, DnaK and GrpE are required for fully efficient folding. Also involved, together with DnaK and GrpE, in the DNA replication of plasmids through activation of initiation proteins. This chain is Chaperone protein DnaJ, found in Desulfitobacterium hafniense (strain DSM 10664 / DCB-2).